The chain runs to 65 residues: Large ribosomal subunit protein bL32 (65 aa).

The span at 1–19 (MAVQKSRKTPSKRGMRRSH) shows a compositional bias: basic residues. The tract at residues 1-32 (MAVQKSRKTPSKRGMRRSHNALVKSTLSEDQE) is disordered.

Belongs to the bacterial ribosomal protein bL32 family.

In Vesicomyosocius okutanii subsp. Calyptogena okutanii (strain HA), this protein is Large ribosomal subunit protein bL32.